Reading from the N-terminus, the 640-residue chain is Lysophospholipase (640 aa).

Positions 1–25 (MWFLNSVNLLFLVCSVALHLDAVNA) are cleaved as a signal peptide. Residues 38–589 (DCDENINLVR…EKYCWNGTVD (552 aa)) enclose the PLA2c domain. 15 N-linked (GlcNAc...) asparagine glycosylation sites follow: Asn84, Asn126, Asn163, Asn173, Asn218, Asn280, Asn310, Asn317, Asn348, Asn391, Asn492, Asn516, Asn544, Asn568, and Asn585. Over residues 594–610 (ISSTTSSSASSTSTSDS) the composition is skewed to low complexity. Residues 594 to 616 (ISSTTSSSASSTSTSDSGNKENS) are disordered.

It belongs to the lysophospholipase family. Highly glycosylated.

The protein localises to the secreted. It catalyses the reaction a 1-acyl-sn-glycero-3-phosphocholine + H2O = sn-glycerol 3-phosphocholine + a fatty acid + H(+). In terms of biological role, catalyzes the release of fatty acids from lysophospholipids. At acidic pH the enzyme hydrolyzes all phospholipid substrates without metal ion. On the other hand, at alkaline pH the enzyme shows substrate specificity for phosphatidylcholine and lysophosphatidylcholine and requires Ca(2+), Fe(3+), or Al(3+) for the activity. The polypeptide is Lysophospholipase (PLB) (Kluyveromyces lactis (strain ATCC 8585 / CBS 2359 / DSM 70799 / NBRC 1267 / NRRL Y-1140 / WM37) (Yeast)).